Reading from the N-terminus, the 337-residue chain is Tetraacyldisaccharide 4'-kinase (337 aa).

52–59 (TLGGAGKT) serves as a coordination point for ATP.

This sequence belongs to the LpxK family.

The catalysed reaction is a lipid A disaccharide + ATP = a lipid IVA + ADP + H(+). It participates in glycolipid biosynthesis; lipid IV(A) biosynthesis; lipid IV(A) from (3R)-3-hydroxytetradecanoyl-[acyl-carrier-protein] and UDP-N-acetyl-alpha-D-glucosamine: step 6/6. Its function is as follows. Transfers the gamma-phosphate of ATP to the 4'-position of a tetraacyldisaccharide 1-phosphate intermediate (termed DS-1-P) to form tetraacyldisaccharide 1,4'-bis-phosphate (lipid IVA). The polypeptide is Tetraacyldisaccharide 4'-kinase (Methylobacterium nodulans (strain LMG 21967 / CNCM I-2342 / ORS 2060)).